Consider the following 263-residue polypeptide: Glutamate racemase (263 aa).

Substrate contacts are provided by residues 12–13 (DS) and 44–45 (YG). The Proton donor/acceptor role is filled by cysteine 75. 76 to 77 (NT) lines the substrate pocket. Cysteine 186 serves as the catalytic Proton donor/acceptor. Substrate is bound at residue 187 to 188 (TH).

This sequence belongs to the aspartate/glutamate racemases family.

It catalyses the reaction L-glutamate = D-glutamate. It participates in cell wall biogenesis; peptidoglycan biosynthesis. Its function is as follows. Provides the (R)-glutamate required for cell wall biosynthesis. The polypeptide is Glutamate racemase (Ectopseudomonas mendocina (strain ymp) (Pseudomonas mendocina)).